Consider the following 658-residue polypeptide: Threonine--tRNA ligase (658 aa).

The TGS domain occupies 1–61; it reads MSDVRVTVQR…AAGDVVEPIT (61 aa). The interval 259-554 is catalytic; sequence DHRRLGAELD…LLEHYAGALP (296 aa). 3 residues coordinate Zn(2+): C353, H404, and H531.

The protein belongs to the class-II aminoacyl-tRNA synthetase family. Homodimer. Requires Zn(2+) as cofactor.

It is found in the cytoplasm. It carries out the reaction tRNA(Thr) + L-threonine + ATP = L-threonyl-tRNA(Thr) + AMP + diphosphate + H(+). Catalyzes the attachment of threonine to tRNA(Thr) in a two-step reaction: L-threonine is first activated by ATP to form Thr-AMP and then transferred to the acceptor end of tRNA(Thr). Also edits incorrectly charged L-seryl-tRNA(Thr). The polypeptide is Threonine--tRNA ligase (Parafrankia sp. (strain EAN1pec)).